The primary structure comprises 184 residues: Large ribosomal subunit protein uL5 (184 aa).

This sequence belongs to the universal ribosomal protein uL5 family. Part of the 50S ribosomal subunit; part of the 5S rRNA/L5/L18/L25 subcomplex. Contacts the 5S rRNA and the P site tRNA. Forms a bridge to the 30S subunit in the 70S ribosome.

Its function is as follows. This is one of the proteins that bind and probably mediate the attachment of the 5S RNA into the large ribosomal subunit, where it forms part of the central protuberance. In the 70S ribosome it contacts protein S13 of the 30S subunit (bridge B1b), connecting the 2 subunits; this bridge is implicated in subunit movement. Contacts the P site tRNA; the 5S rRNA and some of its associated proteins might help stabilize positioning of ribosome-bound tRNAs. In Ureaplasma urealyticum serovar 10 (strain ATCC 33699 / Western), this protein is Large ribosomal subunit protein uL5.